The sequence spans 86 residues: Small ribosomal subunit protein uS15 (86 aa).

The span at 1–10 (MSIDTQSIIE) shows a compositional bias: polar residues. Residues 1–21 (MSIDTQSIIENNKRSAHDTGS) are disordered.

Belongs to the universal ribosomal protein uS15 family. Part of the 30S ribosomal subunit. Forms a bridge to the 50S subunit in the 70S ribosome, contacting the 23S rRNA.

One of the primary rRNA binding proteins, it binds directly to 16S rRNA where it helps nucleate assembly of the platform of the 30S subunit by binding and bridging several RNA helices of the 16S rRNA. In terms of biological role, forms an intersubunit bridge (bridge B4) with the 23S rRNA of the 50S subunit in the ribosome. This chain is Small ribosomal subunit protein uS15, found in Xylella fastidiosa (strain M23).